The primary structure comprises 1063 residues: Structural polyprotein (1063 aa).

Positions 23–131 are disordered; it reads LRAELAAGAS…LGPPTNPFQA (109 aa). Positions 30–69 are human C1QBP/SF2P32-binding; it reads GASQLRRPRPPRQRDSSTSGDDSGRDSGGPRRRRGNRGRG. The residue at position 46 (Ser46) is a Phosphoserine; by host. Positions 59 to 69 are enriched in basic residues; the sequence is PRRRRGNRGRG. Over residues 70–87 the composition is skewed to basic and acidic residues; that stretch reads QRKDWSKAPPPPEERQES. The span at 93–107 shows a compositional bias: pro residues; the sequence is VPKPPRAPPQPPQPP. A disulfide bridge links Cys153 with Cys197. Positions 279–300 are functions as E2 signal peptide; it reads GAPQVFLAGLLLAAVAVGTARA. Residues 301-534 lie on the Extracellular side of the membrane; sequence GLQPRTDIAA…LWLATANALS (234 aa). The segment at 305–327 is disordered; that stretch reads RTDIAAPPAPPQAPRAHGKHYGH. 4 N-linked (GlcNAc...) asparagine; by host glycosylation sites follow: Asn353, Asn371, Asn410, and Asn429. The chain crosses the membrane as a helical span at residues 535–555; the sequence is LDHALAAVVLLVPWVLIFMLC. The Cytoplasmic segment spans residues 556–582; the sequence is RRACRRRGAAAALTAVVLQGYNPPAYG. A functions as E1 signal peptide region spans residues 562 to 582; that stretch reads RGAAAALTAVVLQGYNPPAYG. The Extracellular portion of the chain corresponds to 583–1028; the sequence is EEAFTYLCTA…QTWAEWAAAH (446 aa). Intrachain disulfides connect Cys590/Cys595, Cys619/Cys824, Cys641/Cys653, Cys699/Cys712, Cys758/Cys767, Cys807/Cys817, Cys931/Cys934, and Cys950/Cys983. A glycan (N-linked (GlcNAc...) asparagine; by host) is linked at Asn658. Positions 670 and 671 each coordinate Ca(2+). The Ca(2+) site is built by Asp718 and Thr719. Residues Asn759 and Asn791 are each glycosylated (N-linked (GlcNAc...) asparagine; by host). O-linked (GalNAc...) threonine; by host glycans are attached at residues Thr1011 and Thr1012. Residues 1029–1049 form a helical membrane-spanning segment; that stretch reads WWQLTLGAICALLLAGLLACC. Topologically, residues 1050–1063 are extracellular; it reads AKCLYHLRGAIAPR.

In terms of assembly, homodimer; further assembles into homooligomer. Interacts with human C1QBP. Interacts (via N-terminus) with protease/methyltransferase p150. As to quaternary structure, heterodimer with spike glycoprotein E2. Heterodimer with spike glycoprotein E1. Post-translationally, structural polyprotein: Specific enzymatic cleavages in vivo yield mature proteins. Two signal peptidase-mediated cleavages within the polyprotein produce the structural proteins capsid, E2, and E1. The E2 signal peptide remains attached to the C-terminus of the capsid protein after cleavage by the signal peptidase. Another signal peptide at E2 C-terminus directs E1 to the ER, with a similar mechanism. Contains three N-linked oligosaccharides. In terms of processing, capsid is phosphorylated on Ser-46 by host. This phosphorylation negatively regulates capsid protein RNA-binding activity. Dephosphorylated by human PP1A.

The protein resides in the virion. It is found in the host cytoplasm. Its subcellular location is the host mitochondrion. It localises to the virion membrane. The protein localises to the host Golgi apparatus membrane. Its function is as follows. Capsid protein interacts with genomic RNA and assembles into icosahedric core particles 65-70 nm in diameter. The resulting nucleocapsid eventually associates with the cytoplasmic domain of E2 at the cell membrane, leading to budding and formation of mature virions from host Golgi membranes. Phosphorylation negatively regulates RNA-binding activity, possibly delaying virion assembly during the viral replication phase. Capsid protein dimerizes and becomes disulfide-linked in the virion. Modulates genomic RNA replication. Modulates subgenomic RNA synthesis by interacting with human C1QBP/SF2P32. Induces both perinuclear clustering of mitochondria and the formation of electron-dense intermitochondrial plaques, both hallmarks of rubella virus infected cells. Induces apoptosis when expressed in transfected cells. In terms of biological role, responsible for viral attachment to target host cell, by binding to the cell receptor. Its transport to the plasma membrane depends on interaction with E1 protein. The surface glycoproteins display an irregular helical organization and a pseudo-tetrameric inner nucleocapsid arrangement. Class II viral fusion protein. Fusion activity is inactive as long as E1 is bound to E2 in mature virion. After virus attachment to target cell and clathrin-mediated endocytosis, acidification of the endosome would induce dissociation of E1/E2 heterodimer and concomitant trimerization of the E1 subunits. This E1 homotrimer is fusion active, and promotes release of viral nucleocapsid in cytoplasm after endosome and viral membrane fusion. The cytoplasmic tail of spike glycoprotein E1 modulates virus release. The surface glycoproteins display an irregular helical organization and a pseudo-tetrameric inner nucleocapsid arrangement. The protein is Structural polyprotein of Homo sapiens (Human).